The primary structure comprises 511 residues: 2-isopropylmalate synthase (511 aa).

Residues 5 to 267 (IQIFDTTLRD…QTQINLEETK (263 aa)) enclose the Pyruvate carboxyltransferase domain. Mn(2+) is bound by residues aspartate 14, histidine 202, histidine 204, and asparagine 238. The segment at 391–511 (KVETLQLQFV…NTKVEEGIHS (121 aa)) is regulatory domain.

It belongs to the alpha-IPM synthase/homocitrate synthase family. LeuA type 1 subfamily. As to quaternary structure, homodimer. It depends on Mn(2+) as a cofactor.

The protein resides in the cytoplasm. The catalysed reaction is 3-methyl-2-oxobutanoate + acetyl-CoA + H2O = (2S)-2-isopropylmalate + CoA + H(+). It functions in the pathway amino-acid biosynthesis; L-leucine biosynthesis; L-leucine from 3-methyl-2-oxobutanoate: step 1/4. Functionally, catalyzes the condensation of the acetyl group of acetyl-CoA with 3-methyl-2-oxobutanoate (2-ketoisovalerate) to form 3-carboxy-3-hydroxy-4-methylpentanoate (2-isopropylmalate). The sequence is that of 2-isopropylmalate synthase from Staphylococcus saprophyticus subsp. saprophyticus (strain ATCC 15305 / DSM 20229 / NCIMB 8711 / NCTC 7292 / S-41).